We begin with the raw amino-acid sequence, 1035 residues long: Translation initiation factor IF-2 (1035 aa).

Residues 56–66 (KDDKSNTDDNK) show a composition bias toward basic and acidic residues. Disordered regions lie at residues 56–80 (KDDK…SSEA) and 114–402 (ANDA…VIKN). Residues 68–78 (ASAHSVAQHSS) are compositionally biased toward polar residues. 2 stretches are compositionally biased toward basic and acidic residues: residues 114-137 (ANDA…RVET) and 146-200 (LVRE…EIKD). The span at 219–228 (DSATNVNLNE) shows a compositional bias: polar residues. Residues 229 to 238 (SIDKDKKTND) show a composition bias toward basic and acidic residues. Over residues 239–253 (NRQVSTDNSAVNNEE) the composition is skewed to polar residues. Positions 259–315 (LNKKDMDKKNNNKKNEAKKNAEKKNEAKKNEKNDNKGGNAKKNEHRSPDMKKNDSNR) are enriched in basic and acidic residues. A compositionally biased stretch (polar residues) spans 316 to 325 (PQDANKQNSK). 2 stretches are compositionally biased toward basic and acidic residues: residues 327 to 347 (AADK…EIPK) and 354 to 385 (QKEE…KEQP). In terms of domain architecture, tr-type G spans 537 to 706 (PRPPVVVVMG…LLAADMLELK (170 aa)). The segment at 546 to 553 (GHVDHGKT) is G1. GTP is bound at residue 546–553 (GHVDHGKT). The segment at 571–575 (GITQH) is G2. A G3 region spans residues 592–595 (DTPG). GTP is bound by residues 592–596 (DTPGH) and 646–649 (NKID). The segment at 646–649 (NKID) is G4. The segment at 682 to 684 (SAK) is G5.

The protein belongs to the TRAFAC class translation factor GTPase superfamily. Classic translation factor GTPase family. IF-2 subfamily.

The protein localises to the cytoplasm. In terms of biological role, one of the essential components for the initiation of protein synthesis. Protects formylmethionyl-tRNA from spontaneous hydrolysis and promotes its binding to the 30S ribosomal subunits. Also involved in the hydrolysis of GTP during the formation of the 70S ribosomal complex. The polypeptide is Translation initiation factor IF-2 (Acetivibrio thermocellus (strain ATCC 27405 / DSM 1237 / JCM 9322 / NBRC 103400 / NCIMB 10682 / NRRL B-4536 / VPI 7372) (Clostridium thermocellum)).